Consider the following 174-residue polypeptide: MNKETKQQQVAELHDKLQRAKAVFLADFRGMNVEQATTLRNELRSAAVEYKVVKNTLLELASRDTDKESLSQHFAGPTAIALSYDDPVSAAKVLSKFAKTQPNTFKLKAGVLTGKAISVADIQSLADLPSREVLIAKLLGTINAPVANFVGVLAAVPGSFVRALNAIKVQKEGN.

It belongs to the universal ribosomal protein uL10 family. As to quaternary structure, part of the ribosomal stalk of the 50S ribosomal subunit. The N-terminus interacts with L11 and the large rRNA to form the base of the stalk. The C-terminus forms an elongated spine to which L12 dimers bind in a sequential fashion forming a multimeric L10(L12)X complex.

Its function is as follows. Forms part of the ribosomal stalk, playing a central role in the interaction of the ribosome with GTP-bound translation factors. The polypeptide is Large ribosomal subunit protein uL10 (Geobacter sulfurreducens (strain ATCC 51573 / DSM 12127 / PCA)).